Here is a 272-residue protein sequence, read N- to C-terminus: DNA repair protein RecO (272 aa).

The protein belongs to the RecO family.

Involved in DNA repair and RecF pathway recombination. The polypeptide is DNA repair protein RecO (Latilactobacillus sakei subsp. sakei (strain 23K) (Lactobacillus sakei subsp. sakei)).